Consider the following 352-residue polypeptide: Macrophage-capping protein (352 aa).

Met-1 is subject to N-acetylmethionine. The stretch at 27–75 (EKLKPVPIARESHGIFFSGDSYLVLHNGPEEASHLHLWIGQQSSRDEQG) is one Gelsolin-like 1 repeat. A Nuclear localization signal motif is present at residues 139 to 148 (RKLYQVKGKK). 2 Gelsolin-like repeats span residues 150 to 190 (IRAT…LERN) and 265 to 311 (MNLT…KERQ). Ser-341 carries the phosphoserine modification.

The protein belongs to the villin/gelsolin family. Interacts with NUP62. Interacts with NUTF2 and RAN; involved in CAPG nuclear import. Phosphorylated. Nuclear GCAP39 is more highly phosphorylated than cytoplasmic GCAP39. Present in a large variety of tissues and is particularly abundant in kidney and lung. Highly expressed in macrophages (at protein level).

The protein localises to the nucleus. It localises to the cytoplasm. The protein resides in the melanosome. Its subcellular location is the cell projection. It is found in the lamellipodium. The protein localises to the ruffle. Its function is as follows. Calcium-sensitive protein which reversibly blocks the barbed ends of actin filaments but does not sever preformed actin filaments. May play an important role in macrophage function. May play a role in regulating cytoplasmic and/or nuclear structures through potential interactions with actin. May bind DNA. Uncapping occurs either when Ca(2+) falls or when the concentration of polyphosphoinositide rises, both at low and high Ca(2+). In Mus musculus (Mouse), this protein is Macrophage-capping protein (Capg).